Here is a 634-residue protein sequence, read N- to C-terminus: Chaperone protein HtpG (634 aa).

An a; substrate-binding region spans residues 1–345 (MEHQQNHTFS…SNDLPLNVSR (345 aa)). The tract at residues 346-562 (EILQDTRVTA…NDDMSTQMAK (217 aa)) is b. Positions 563–634 (LMAQMGQPVP…VGRINKLLLA (72 aa)) are c.

It belongs to the heat shock protein 90 family. As to quaternary structure, homodimer.

The protein localises to the cytoplasm. Its function is as follows. Molecular chaperone. Has ATPase activity. This Psychromonas ingrahamii (strain DSM 17664 / CCUG 51855 / 37) protein is Chaperone protein HtpG.